Consider the following 178-residue polypeptide: Acireductone dioxygenase (178 aa).

The interval 1 to 22 (MKAYWYDNKPGDQREPHDSGRP) is disordered. The segment covering 9–22 (KPGDQREPHDSGRP) has biased composition (basic and acidic residues). Residues His-81, His-83, Glu-87, and His-126 each coordinate Fe(2+). 4 residues coordinate Ni(2+): His-81, His-83, Glu-87, and His-126.

The protein belongs to the acireductone dioxygenase (ARD) family. Requires Fe(2+) as cofactor. It depends on Ni(2+) as a cofactor.

It localises to the cytoplasm. It is found in the nucleus. The enzyme catalyses 1,2-dihydroxy-5-(methylsulfanyl)pent-1-en-3-one + O2 = 4-methylsulfanyl-2-oxobutanoate + formate + 2 H(+). It catalyses the reaction 1,2-dihydroxy-5-(methylsulfanyl)pent-1-en-3-one + O2 = 3-(methylsulfanyl)propanoate + CO + formate + 2 H(+). It participates in amino-acid biosynthesis; L-methionine biosynthesis via salvage pathway; L-methionine from S-methyl-5-thio-alpha-D-ribose 1-phosphate: step 5/6. Functionally, catalyzes 2 different reactions between oxygen and the acireductone 1,2-dihydroxy-3-keto-5-methylthiopentene (DHK-MTPene) depending upon the metal bound in the active site. Fe-containing acireductone dioxygenase (Fe-ARD) produces formate and 2-keto-4-methylthiobutyrate (KMTB), the alpha-ketoacid precursor of methionine in the methionine recycle pathway. Ni-containing acireductone dioxygenase (Ni-ARD) produces methylthiopropionate, carbon monoxide and formate, and does not lie on the methionine recycle pathway. This chain is Acireductone dioxygenase (adi1), found in Emericella nidulans (strain FGSC A4 / ATCC 38163 / CBS 112.46 / NRRL 194 / M139) (Aspergillus nidulans).